Reading from the N-terminus, the 82-residue chain is Penaeidin-3f (82 aa).

Residues 1–19 (MRLVACLVFLASFALVCQG) form the signal peptide. Glutamine 20 is subject to Pyrrolidone carboxylic acid. Intrachain disulfides connect cysteine 51/cysteine 66, cysteine 55/cysteine 73, and cysteine 67/cysteine 74. The residue at position 81 (serine 81) is a Serine amide.

It belongs to the penaeidin family.

Its subcellular location is the cytoplasmic granule. Antibacterial and antifungal activity. Presents chitin-binding activity. This is Penaeidin-3f from Penaeus vannamei (Whiteleg shrimp).